A 666-amino-acid polypeptide reads, in one-letter code: Vicilin-like antimicrobial peptides 2-1 (666 aa).

Residues 1–27 (MAINTSNLCSLLFLLSLFLLSTTVSLA) form the signal peptide. 2 disordered regions span residues 161 to 191 (QQKR…DPQQ) and 219 to 254 (QQRQ…PYYF). Cupin type-1 domains are found at residues 271-410 (SVLE…EKLR) and 455-625 (YNLF…KEVE). A disordered region spans residues 629–655 (NSQDQSIFFPGPRQHQQQSPRSTKQQQ). The span at 642–655 (QHQQQSPRSTKQQQ) shows a compositional bias: low complexity.

This sequence belongs to the 7S seed storage protein family.

It is found in the secreted. Antimicrobial peptides 2b, 2c and 2d have antibacterial and antifungal activity against a range of species. The polypeptide is Vicilin-like antimicrobial peptides 2-1 (Macadamia integrifolia (Macadamia nut)).